A 34-amino-acid chain; its full sequence is ISIVSLFKAITDMLLTEQIYANYFSTPRLRFYPI.

This chain is Egg-releasing peptide, found in Aplysia californica (California sea hare).